The following is a 700-amino-acid chain: MAVKMRIGRRRAIQQGIAEGGFEWRRVWGCREADSRGALWELVWGERSVRERNAAGAAEEVIALFIMDEMCDPASNLEYVVEKAKCDVHRTSSAEEFFTEYGDANRYRIQEVIGKGSYGVVCSAIDLHTRQKVAIKKVHNIFEHVSDAARILREIKLLRLLRHPDIVEIKHIMLPPSRRDFKDIYVVFELMESDLHQVIKANDDLTKEHYQFFLYQLLRALKYIHTASVYHRDLKPKNILANSNCKLKICDFGLARVAFNDTPTTVFWTDYVATRWYRAPELCGSFFSKYTPAIDIWSIGCIFAEVLTGKPLFPGKNVVHQLDLMTDLLGTPSMDTISRVRNEKARRYLSSMRKKDPVPFSQKFPNADPLALKLLQRLLAFDPKDRPTAEEALTDPYFKGLSKIDREPSCQPIRKLEFEFEQKKLSKEDIRELIFQEILEYHPQLQKNYRNGRERATFLYPSAVDQFKKQFSNLEESNGSGSAIPMERKHASLPRSTTVHSTPIPPKEQPLAASLKSSRPVSDEPCKNPWVMGGFSGNIPTSSQVSQVAKPVAPGRPVGSVFPYETGSTNDPYGPRGPVMSSGYPPQQQISQAYGYHQVPARMNCVEQSQAMDAYKMHSQSQTQAYAYPNSKVTADVALDMRGSTFHHSAGSKNGSLDRMVTQTDIYTRSLNGIVAAATSAGVGTNRKVGAVPISTSRMY.

The Protein kinase domain maps to Tyr107 to Phe398. Residues Ile113–Val121 and Lys136 each bind ATP. The active-site Proton acceptor is the Asp233. The residue at position 269 (Thr269) is a Phosphothreonine. The TXY motif lies at Thr269–Tyr271. A Phosphotyrosine modification is found at Tyr271. The disordered stretch occupies residues Glu475–Asp523.

It belongs to the protein kinase superfamily. CMGC Ser/Thr protein kinase family. MAP kinase subfamily. In terms of processing, dually phosphorylated on Thr-269 and Tyr-271, which activates the enzyme.

The catalysed reaction is L-seryl-[protein] + ATP = O-phospho-L-seryl-[protein] + ADP + H(+). The enzyme catalyses L-threonyl-[protein] + ATP = O-phospho-L-threonyl-[protein] + ADP + H(+). With respect to regulation, activated by threonine and tyrosine phosphorylation. This chain is Mitogen-activated protein kinase 9 (MPK9), found in Oryza sativa subsp. japonica (Rice).